Here is a 37-residue protein sequence, read N- to C-terminus: Large ribosomal subunit protein bL36 (37 aa).

The protein belongs to the bacterial ribosomal protein bL36 family.

The sequence is that of Large ribosomal subunit protein bL36 from Symbiobacterium thermophilum (strain DSM 24528 / JCM 14929 / IAM 14863 / T).